The chain runs to 303 residues: Oxygen-dependent coproporphyrinogen-III oxidase (303 aa).

Ser93 provides a ligand contact to substrate. A divalent metal cation is bound by residues His97 and His107. The Proton donor role is filled by His107. Asn109–Arg111 serves as a coordination point for substrate. Positions 146 and 176 each coordinate a divalent metal cation. Residues Tyr241–Gly276 are important for dimerization. A substrate-binding site is contributed by Gly259–Arg261.

It belongs to the aerobic coproporphyrinogen-III oxidase family. As to quaternary structure, homodimer. It depends on a divalent metal cation as a cofactor.

It is found in the cytoplasm. It catalyses the reaction coproporphyrinogen III + O2 + 2 H(+) = protoporphyrinogen IX + 2 CO2 + 2 H2O. It participates in porphyrin-containing compound metabolism; protoporphyrin-IX biosynthesis; protoporphyrinogen-IX from coproporphyrinogen-III (O2 route): step 1/1. Involved in the heme biosynthesis. Catalyzes the aerobic oxidative decarboxylation of propionate groups of rings A and B of coproporphyrinogen-III to yield the vinyl groups in protoporphyrinogen-IX. This is Oxygen-dependent coproporphyrinogen-III oxidase from Pseudomonas putida (strain W619).